Reading from the N-terminus, the 146-residue chain is Hemoglobin subunit beta-2 (146 aa).

Positions 2–146 (EWTDFERATI…VVSSLGRQYH (145 aa)) constitute a Globin domain. Residues H63 and H92 each contribute to the heme b site.

Belongs to the globin family. In terms of assembly, hb2 is a heterotetramer of two alpha chains and two beta-2 chains. As to expression, red blood cells.

In terms of biological role, involved in oxygen transport from gills to the various peripheral tissues. The protein is Hemoglobin subunit beta-2 (hbb2) of Pseudaphritis urvillii (Congolli).